The sequence spans 454 residues: tRNA modification GTPase MnmE (454 aa).

The (6S)-5-formyl-5,6,7,8-tetrahydrofolate site is built by arginine 23, glutamate 80, and lysine 120. A TrmE-type G domain is found at 216–377; the sequence is GMKVVIAGRP…LRNHLKQSMG (162 aa). Asparagine 226 serves as a coordination point for K(+). GTP contacts are provided by residues 226 to 231, 245 to 251, 270 to 273, 335 to 338, and 358 to 360; these read NAGKSS, TDIAGTT, DTAG, NKAD, and SAR. Position 230 (serine 230) interacts with Mg(2+). 3 residues coordinate K(+): threonine 245, isoleucine 247, and threonine 250. Mg(2+) is bound at residue threonine 251. A (6S)-5-formyl-5,6,7,8-tetrahydrofolate-binding site is contributed by lysine 454.

The protein belongs to the TRAFAC class TrmE-Era-EngA-EngB-Septin-like GTPase superfamily. TrmE GTPase family. In terms of assembly, homodimer. Heterotetramer of two MnmE and two MnmG subunits. Requires K(+) as cofactor.

Its subcellular location is the cytoplasm. Its function is as follows. Exhibits a very high intrinsic GTPase hydrolysis rate. Involved in the addition of a carboxymethylaminomethyl (cmnm) group at the wobble position (U34) of certain tRNAs, forming tRNA-cmnm(5)s(2)U34. The sequence is that of tRNA modification GTPase MnmE from Escherichia coli (strain 55989 / EAEC).